Here is a 142-residue protein sequence, read N- to C-terminus: Large ribosomal subunit protein uL13 (142 aa).

It belongs to the universal ribosomal protein uL13 family. As to quaternary structure, part of the 50S ribosomal subunit.

Its function is as follows. This protein is one of the early assembly proteins of the 50S ribosomal subunit, although it is not seen to bind rRNA by itself. It is important during the early stages of 50S assembly. This is Large ribosomal subunit protein uL13 from Acholeplasma laidlawii (strain PG-8A).